The sequence spans 421 residues: Pyridinium-3,5-bisthiocarboxylic acid mononucleotide nickel insertion protein (421 aa).

It belongs to the LarC family.

It catalyses the reaction Ni(II)-pyridinium-3,5-bisthiocarboxylate mononucleotide = pyridinium-3,5-bisthiocarboxylate mononucleotide + Ni(2+). In terms of biological role, involved in the biosynthesis of a nickel-pincer cofactor ((SCS)Ni(II) pincer complex). Binds Ni(2+), and functions in nickel delivery to pyridinium-3,5-bisthiocarboxylic acid mononucleotide (P2TMN), to form the mature cofactor. Is thus probably required for the activation of nickel-pincer cofactor-dependent enzymes. The protein is Pyridinium-3,5-bisthiocarboxylic acid mononucleotide nickel insertion protein of Alkaliphilus metalliredigens (strain QYMF).